Here is a 99-residue protein sequence, read N- to C-terminus: U1-theraphotoxin-Lsp1b (99 aa).

Positions 1-23 are cleaved as a signal peptide; sequence MRSLTLAALLLCSLLLVFHTSAA. The propeptide occupies 24–50; sequence EELQAQEGHLMIPGDTDTALETVDDER. 4 cysteine pairs are disulfide-bonded: Cys54–Cys67, Cys58–Cys91, Cys72–Cys74, and Cys85–Cys96.

This sequence belongs to the neurotoxin 12 (Hwtx-2) family. 04 (lasiotoxin) subfamily. Expressed by the venom gland.

The protein localises to the secreted. Toxin that causes irreversible contractile paralysis into adult Aedes aegypti resulting in 100% mortality after 24 hours. In Lasiodora sp. (strain IBSP 8539) (Brazilian salmon pink birdeater), this protein is U1-theraphotoxin-Lsp1b.